The primary structure comprises 330 residues: Aquaporin-3 (330 aa).

Topologically, residues 1–40 (MSATPIIHLRDVKKRTGVLNAWERVRNKPQVHWAMECFAE) are cytoplasmic. The helical transmembrane segment at 41 to 61 (ALGVFFYVYFGLGSTAAWVIG) threads the bilayer. Over 62–71 (NILKQSGLSS) the chain is Extracellular. The chain crosses the membrane as a helical span at residues 72–92 (VFQIGFAYAFGILFAIGVCAA). The Cytoplasmic segment spans residues 93 to 124 (TSGGHFNPCVTIAFTIFRGFPPLKAVRYIVAQ). Positions 99–101 (NPC) match the NPA 1 motif. A helical transmembrane segment spans residues 125 to 145 (ILGAYIASALVYNQWKVLIVE). Residues 146 to 157 (SELLLKQAGVYE) lie on the Extracellular side of the membrane. A helical membrane pass occupies residues 158–178 (TTMFTPNGPAGIFALYLLPGA). The Cytoplasmic portion of the chain corresponds to 179-183 (QTLPR). A helical transmembrane segment spans residues 184-204 (AFLNEFVNCFVLALVIWAALD). Residues 205–207 (PTS) lie on the Extracellular side of the membrane. Residues 208 to 228 (FMIPPVMAPFIIAAAYAGSIW) traverse the membrane as a helical segment. The Cytoplasmic portion of the chain corresponds to 229–264 (GYAVPAISLNSARDIGCRLFALTIWGKSAAGGSYSA). The short motif at 238 to 240 (NSA) is the NPA 2 element. A helical transmembrane segment spans residues 265-285 (IAALVNIPATLLAAVVYELFL). Residues 286 to 330 (VDSDRVVAGSHLEFMNVAANHRRHRQQAEDDNLVEADDSSQEKPV) lie on the Extracellular side of the membrane. Residues 308–330 (RHRQQAEDDNLVEADDSSQEKPV) are disordered. The segment covering 314 to 324 (EDDNLVEADDS) has biased composition (acidic residues).

It belongs to the MIP/aquaporin (TC 1.A.8) family.

The protein resides in the cell membrane. The enzyme catalyses H2O(in) = H2O(out). The catalysed reaction is CO2(out) = CO2(in). In terms of biological role, water channel required to facilitate the transport of water across membranes. Also mediates the transport of carbon dioxide across the membrane. This is Aquaporin-3 from Laccaria bicolor (Bicoloured deceiver).